A 131-amino-acid polypeptide reads, in one-letter code: ATP synthase lipid-binding protein, mitochondrial (131 aa).

The transit peptide at 1-56 (MLSAARLIAPAARSAIFSNAAVVRPLAAVSTQTQLVPAAPAQLSAVRSFQTTSVTK) directs the protein to the mitochondrion. A helical transmembrane segment spans residues 72–92 (VGVAGSGAGIGTVFGSLIIGY). The residue at position 99 (Lys99) is an N6,N6,N6-trimethyllysine. Residues 107–127 (ILGFALSEAMGLFCLMMAFLL) traverse the membrane as a helical segment.

The protein belongs to the ATPase C chain family. In terms of assembly, F-type ATPases have 2 components, CF(1) - the catalytic core - and CF(0) - the membrane proton channel. CF(1) has five subunits: alpha(3), beta(3), gamma(1), delta(1), epsilon(1). CF(0) has three main subunits: a, b and c. In terms of processing, trimethylated by ATPSCKMT at Lys-99. Methylation may be required for proper incorporation of the C subunit into the ATP synthase complex and mitochondrial respiration.

It localises to the mitochondrion membrane. Its function is as follows. Mitochondrial membrane ATP synthase (F(1)F(0) ATP synthase or Complex V) produces ATP from ADP in the presence of a proton gradient across the membrane which is generated by electron transport complexes of the respiratory chain. F-type ATPases consist of two structural domains, F(1) - containing the extramembraneous catalytic core and F(0) - containing the membrane proton channel, linked together by a central stalk and a peripheral stalk. During catalysis, ATP synthesis in the catalytic domain of F(1) is coupled via a rotary mechanism of the central stalk subunits to proton translocation. Part of the complex F(0) domain. A homomeric c-ring of probably 10 subunits is part of the complex rotary element. The protein is ATP synthase lipid-binding protein, mitochondrial of Manduca sexta (Tobacco hawkmoth).